The sequence spans 341 residues: Putative amino-acid ABC transporter-binding protein YhdW (341 aa).

The N-terminal stretch at 1–19 (MKKMMIATLAAASVLLAVA) is a signal peptide.

This sequence belongs to the bacterial solute-binding protein 3 family.

Its subcellular location is the periplasm. In terms of biological role, probably part of the binding-protein-dependent transport system YdhWXYZ for an amino acid. This chain is Putative amino-acid ABC transporter-binding protein YhdW (yhdW), found in Escherichia coli O157:H7.